The primary structure comprises 674 residues: DNA ligase (674 aa).

Residues 34–38, 82–83, and Glu-107 contribute to the NAD(+) site; these read DADFD and SL. The N6-AMP-lysine intermediate role is filled by Lys-109. Residues Arg-130, Glu-170, Lys-286, and Lys-310 each coordinate NAD(+). Zn(2+) is bound by residues Cys-404, Cys-407, Cys-423, and Cys-429. Residues 593–674 form the BRCT domain; sequence KPAQTLEGIT…FTRLLETGEA (82 aa).

This sequence belongs to the NAD-dependent DNA ligase family. LigA subfamily. Mg(2+) serves as cofactor. The cofactor is Mn(2+).

It catalyses the reaction NAD(+) + (deoxyribonucleotide)n-3'-hydroxyl + 5'-phospho-(deoxyribonucleotide)m = (deoxyribonucleotide)n+m + AMP + beta-nicotinamide D-nucleotide.. DNA ligase that catalyzes the formation of phosphodiester linkages between 5'-phosphoryl and 3'-hydroxyl groups in double-stranded DNA using NAD as a coenzyme and as the energy source for the reaction. It is essential for DNA replication and repair of damaged DNA. This Corynebacterium aurimucosum (strain ATCC 700975 / DSM 44827 / CIP 107346 / CN-1) (Corynebacterium nigricans) protein is DNA ligase.